Reading from the N-terminus, the 1362-residue chain is Insulin receptor (1362 aa).

The first 37 residues, 1 to 37, serve as a signal peptide directing secretion; it reads MGQGVLRGEGHPNNNPNSKVGWKSLVGIITIFMLILC. The leucine-rich region stretch occupies residues 38 to 184; sequence DQSDGKICYS…DSVEDNYIEL (147 aa). C45 and C63 are joined by a disulfide. N-linked (GlcNAc...) asparagine glycans are attached at residues N53, N115, and N148. 14 cysteine pairs are disulfide-bonded: C163-C192, C196-C219, C206-C225, C229-C238, C233-C244, C245-C253, C249-C262, C265-C274, C278-C290, C296-C321, C303-C311, C325-C338, C341-C345, and C349-C370. Residue N332 is glycosylated (N-linked (GlcNAc...) asparagine). N-linked (GlcNAc...) asparagine glycans are attached at residues N374, N434, and N455. Residues C472 and C505 are joined by a disulfide bond. 2 Fibronectin type-III domains span residues 508 to 629 and 633 to 730; these read NLLT…TNET and VPLD…IQKE. 5 N-linked (GlcNAc...) asparagine glycosylation sites follow: N551, N627, N642, N660, and N707. 2 cysteine pairs are disulfide-bonded: C683–C896 and C822–C830. A disordered region spans residues 694–714; that stretch reads WTPPTEIDENGNENQTEHTSV. Residues 705 to 714 show a composition bias toward polar residues; the sequence is NENQTEHTSV. Positions 741–749 are insulin-binding; the sequence is ENYLHNEVF. Over 759–951 the chain is Extracellular; sequence DLFGVANGTL…PDHPHSNIVK (193 aa). N765 and N779 each carry an N-linked (GlcNAc...) asparagine glycan. The 96-residue stretch at 849-944 folds into the Fibronectin type-III 3 domain; the sequence is VVGPITYEYV…EQAYFQVPDH (96 aa). N917 and N930 each carry an N-linked (GlcNAc...) asparagine glycan. The chain crosses the membrane as a helical span at residues 952–972; the sequence is IITGPIIAVFLLLIVLVYCVV. The Cytoplasmic portion of the chain corresponds to 973-1362; it reads QKKKDAEGPA…ILSLPRSSPS (390 aa). Y993 bears the Phosphotyrosine; by autocatalysis mark. Residues 1012–1287 enclose the Protein kinase domain; that stretch reads INLLRELGQG…MLKDDLRPSF (276 aa). ATP is bound by residues S1022, K1046, and 1093-1099; that span reads ELMAHGD. D1148 serves as the catalytic Proton donor/acceptor. ATP is bound by residues 1152–1153 and D1166; that span reads RN. Y1174, Y1178, Y1179, Y1335, and Y1341 each carry phosphotyrosine; by autocatalysis.

It belongs to the protein kinase superfamily. Tyr protein kinase family. Insulin receptor subfamily. As to quaternary structure, tetramer of 2 alpha and 2 beta chains linked by disulfide bonds. The alpha chains contribute to the formation of the ligand-binding domain, while the beta chains carry the kinase domain. Post-translationally, autophosphorylated on tyrosine residues in response to insulin. Localized mainly to the envelope in oocytes. Localized to the animal hemisphere during early embryonic cleavage. Expressed during organogenesis in regions of ecto- and mesodermic origins. Expressed in the entire encephalon, the otic and optic vesicles, the gills, the somites and the pronephric tubules of the embryo. Also found in adult liver, muscle and regenerated forelimbs.

The protein localises to the cell membrane. The enzyme catalyses L-tyrosyl-[protein] + ATP = O-phospho-L-tyrosyl-[protein] + ADP + H(+). Its activity is regulated as follows. Autophosphorylation activates the kinase activity. Functionally, receptor tyrosine kinase which mediates actions of insulin. May be required for forelimb regeneration. The chain is Insulin receptor (insr) from Xenopus laevis (African clawed frog).